A 294-amino-acid polypeptide reads, in one-letter code: MHNIFKGLITAAITPFKDNTLDLDALEKILEHQIKYEVDGVLIAGSTGECSNLSFEEYKLLLQTSLEIVNKRIPIISGCSSNNTAYARELAAESTKIGVDGFMASPPSYIKPTQEGIYKHFEALHEACNIPIMLYSAPTRSGVDFSDETILRLSKLSRILALKDCGVDLERPMRIRTIVKEDFNLLTGNDEVVLAFNAQGGVGWVSVASNIVPNICKELLEKWYKNDVKEALEIHQRLLPLYKALFVESNPIPIKYAAHYLGLCANKIRLPLTEASYKTKKQIENIITSLSIKI.

Thr47 lines the pyruvate pocket. Tyr135 serves as the catalytic Proton donor/acceptor. Lys163 acts as the Schiff-base intermediate with substrate in catalysis. Val205 is a pyruvate binding site.

It belongs to the DapA family. As to quaternary structure, homotetramer; dimer of dimers.

It is found in the cytoplasm. The catalysed reaction is L-aspartate 4-semialdehyde + pyruvate = (2S,4S)-4-hydroxy-2,3,4,5-tetrahydrodipicolinate + H2O + H(+). The protein operates within amino-acid biosynthesis; L-lysine biosynthesis via DAP pathway; (S)-tetrahydrodipicolinate from L-aspartate: step 3/4. Functionally, catalyzes the condensation of (S)-aspartate-beta-semialdehyde [(S)-ASA] and pyruvate to 4-hydroxy-tetrahydrodipicolinate (HTPA). The protein is 4-hydroxy-tetrahydrodipicolinate synthase of Rickettsia canadensis (strain McKiel).